We begin with the raw amino-acid sequence, 201 residues long: Small ribosomal subunit protein uS4c (201 aa).

Residues leucine 15–glutamine 43 form a disordered region. An S4 RNA-binding domain is found at methionine 89–asparagine 150.

The protein belongs to the universal ribosomal protein uS4 family. In terms of assembly, part of the 30S ribosomal subunit. Contacts protein S5. The interaction surface between S4 and S5 is involved in control of translational fidelity.

It is found in the plastid. Its subcellular location is the chloroplast. In terms of biological role, one of the primary rRNA binding proteins, it binds directly to 16S rRNA where it nucleates assembly of the body of the 30S subunit. With S5 and S12 plays an important role in translational accuracy. The chain is Small ribosomal subunit protein uS4c (rps4) from Drimys granadensis.